We begin with the raw amino-acid sequence, 1153 residues long: ATP-dependent helicase/deoxyribonuclease subunit B (1153 aa).

An ATP-binding site is contributed by 8-15 (GRAGSGKS). [4Fe-4S] cluster contacts are provided by Cys786, Cys1104, Cys1107, and Cys1113.

The protein belongs to the helicase family. AddB/RexB type 1 subfamily. Heterodimer of AddA and AddB. The cofactor is Mg(2+). [4Fe-4S] cluster is required as a cofactor.

Functionally, the heterodimer acts as both an ATP-dependent DNA helicase and an ATP-dependent, dual-direction single-stranded exonuclease. Recognizes the chi site generating a DNA molecule suitable for the initiation of homologous recombination. The AddB subunit has 5' -&gt; 3' nuclease activity but not helicase activity. The protein is ATP-dependent helicase/deoxyribonuclease subunit B of Clostridium acetobutylicum (strain ATCC 824 / DSM 792 / JCM 1419 / IAM 19013 / LMG 5710 / NBRC 13948 / NRRL B-527 / VKM B-1787 / 2291 / W).